The sequence spans 220 residues: 14-3-3-like protein (220 aa).

It belongs to the 14-3-3 family.

The chain is 14-3-3-like protein from Spinacia oleracea (Spinach).